A 316-amino-acid chain; its full sequence is NADH-cytochrome b5 reductase-like (316 aa).

The Oxidoreductase-like domain maps to 17 to 53 (KPVEPLPSQCCGSGCSPCVFDLYYRDLERWETARARN). In terms of domain architecture, FAD-binding FR-type spans 76 to 178 (ETFLAFHIST…RGPFGSFLYE (103 aa)). Residues 158 to 173 (ESWR…GPFG) and 183 to 215 (GELL…TFVT) contribute to the FAD site.

The protein belongs to the flavoprotein pyridine nucleotide cytochrome reductase family. FAD serves as cofactor.

The catalysed reaction is 2 Fe(III)-[cytochrome b5] + NADH = 2 Fe(II)-[cytochrome b5] + NAD(+) + H(+). NADH-cytochrome b5 reductases are involved in desaturation and elongation of fatty acids, cholesterol biosynthesis, drug metabolism, and, in erythrocyte, methemoglobin reduction. The protein is NADH-cytochrome b5 reductase-like (Cyb5rl) of Mus musculus (Mouse).